Here is a 372-residue protein sequence, read N- to C-terminus: Cytochrome b (372 aa).

4 consecutive transmembrane segments (helical) span residues 25–45 (FGSM…FLAI), 69–90 (WIMQ…YTHI), 105–125 (WLSG…GYVL), and 170–190 (FFAL…IHIM). Positions 75 and 89 each coordinate heme b. Heme b-binding residues include histidine 174 and histidine 188. Residue histidine 193 participates in a ubiquinone binding. 4 helical membrane-spanning segments follow: residues 218–238 (YKDM…MSFM), 280–300 (LGGT…PFTH), 312–332 (ITQV…WTAT), and 339–358 (FILI…IIHP).

Belongs to the cytochrome b family. The cytochrome bc1 complex contains 3 respiratory subunits (MT-CYB, CYC1 and UQCRFS1), 2 core proteins (UQCRC1 and UQCRC2) and probably 6 low-molecular weight proteins. Requires heme b as cofactor.

It is found in the mitochondrion inner membrane. Functionally, component of the ubiquinol-cytochrome c reductase complex (complex III or cytochrome b-c1 complex) that is part of the mitochondrial respiratory chain. The b-c1 complex mediates electron transfer from ubiquinol to cytochrome c. Contributes to the generation of a proton gradient across the mitochondrial membrane that is then used for ATP synthesis. The protein is Cytochrome b (MT-CYB) of Pseudechis australis (Mulga snake).